Here is a 210-residue protein sequence, read N- to C-terminus: Somatotropin (210 aa).

Positions 1–23 are cleaved as a signal peptide; it reads MARVLVLLSVVLVSLLVNQGRAS. His38 provides a ligand contact to Zn(2+). Cys71 and Cys183 form a disulfide bridge. Glu192 provides a ligand contact to Zn(2+). Cys200 and Cys208 are disulfide-bonded.

The protein belongs to the somatotropin/prolactin family.

It is found in the secreted. Growth hormone plays an important role in growth control. In Cyprinus carpio (Common carp), this protein is Somatotropin (gh).